The following is a 199-amino-acid chain: uncharacterized protein (199 aa).

This is an uncharacterized protein from Treponema pallidum (strain Nichols).